The following is a 357-amino-acid chain: tRNA N6-adenosine threonylcarbamoyltransferase (357 aa).

2 residues coordinate Fe cation: histidine 120 and histidine 124. Residues leucine 143–glycine 147, aspartate 176, glycine 189, and asparagine 289 contribute to the substrate site. Aspartate 317 provides a ligand contact to Fe cation.

This sequence belongs to the KAE1 / TsaD family. Fe(2+) serves as cofactor.

The protein localises to the cytoplasm. The catalysed reaction is L-threonylcarbamoyladenylate + adenosine(37) in tRNA = N(6)-L-threonylcarbamoyladenosine(37) in tRNA + AMP + H(+). Its function is as follows. Required for the formation of a threonylcarbamoyl group on adenosine at position 37 (t(6)A37) in tRNAs that read codons beginning with adenine. Is involved in the transfer of the threonylcarbamoyl moiety of threonylcarbamoyl-AMP (TC-AMP) to the N6 group of A37, together with TsaE and TsaB. TsaD likely plays a direct catalytic role in this reaction. The protein is tRNA N6-adenosine threonylcarbamoyltransferase of Polynucleobacter asymbioticus (strain DSM 18221 / CIP 109841 / QLW-P1DMWA-1) (Polynucleobacter necessarius subsp. asymbioticus).